A 276-amino-acid polypeptide reads, in one-letter code: Formamidopyrimidine-DNA glycosylase (276 aa).

Catalysis depends on Pro2, which acts as the Schiff-base intermediate with DNA. The Proton donor role is filled by Glu3. Lys58 serves as the catalytic Proton donor; for beta-elimination activity. Residues His92, Arg111, and Lys154 each coordinate DNA. The FPG-type zinc-finger motif lies at 239–273 (QVYGHVGEPCPVCGTKFEKIKVNGRGTTFCPHCQV). The Proton donor; for delta-elimination activity role is filled by Arg263.

The protein belongs to the FPG family. Monomer. Zn(2+) is required as a cofactor.

The enzyme catalyses Hydrolysis of DNA containing ring-opened 7-methylguanine residues, releasing 2,6-diamino-4-hydroxy-5-(N-methyl)formamidopyrimidine.. The catalysed reaction is 2'-deoxyribonucleotide-(2'-deoxyribose 5'-phosphate)-2'-deoxyribonucleotide-DNA = a 3'-end 2'-deoxyribonucleotide-(2,3-dehydro-2,3-deoxyribose 5'-phosphate)-DNA + a 5'-end 5'-phospho-2'-deoxyribonucleoside-DNA + H(+). In terms of biological role, involved in base excision repair of DNA damaged by oxidation or by mutagenic agents. Acts as a DNA glycosylase that recognizes and removes damaged bases. Has a preference for oxidized purines, such as 7,8-dihydro-8-oxoguanine (8-oxoG). Has AP (apurinic/apyrimidinic) lyase activity and introduces nicks in the DNA strand. Cleaves the DNA backbone by beta-delta elimination to generate a single-strand break at the site of the removed base with both 3'- and 5'-phosphates. The protein is Formamidopyrimidine-DNA glycosylase of Lactobacillus helveticus (strain DPC 4571).